A 628-amino-acid chain; its full sequence is Dihydroxy-acid dehydratase (628 aa).

D80 contributes to the Mg(2+) binding site. Residue C121 participates in [2Fe-2S] cluster binding. Mg(2+) is bound by residues D122 and K123. The residue at position 123 (K123) is an N6-carboxylysine. C207 provides a ligand contact to [2Fe-2S] cluster. Residue E503 coordinates Mg(2+). The active-site Proton acceptor is S529.

The protein belongs to the IlvD/Edd family. Homodimer. [2Fe-2S] cluster serves as cofactor. Mg(2+) is required as a cofactor.

It carries out the reaction (2R)-2,3-dihydroxy-3-methylbutanoate = 3-methyl-2-oxobutanoate + H2O. It catalyses the reaction (2R,3R)-2,3-dihydroxy-3-methylpentanoate = (S)-3-methyl-2-oxopentanoate + H2O. The protein operates within amino-acid biosynthesis; L-isoleucine biosynthesis; L-isoleucine from 2-oxobutanoate: step 3/4. It participates in amino-acid biosynthesis; L-valine biosynthesis; L-valine from pyruvate: step 3/4. Its function is as follows. Functions in the biosynthesis of branched-chain amino acids. Catalyzes the dehydration of (2R,3R)-2,3-dihydroxy-3-methylpentanoate (2,3-dihydroxy-3-methylvalerate) into 2-oxo-3-methylpentanoate (2-oxo-3-methylvalerate) and of (2R)-2,3-dihydroxy-3-methylbutanoate (2,3-dihydroxyisovalerate) into 2-oxo-3-methylbutanoate (2-oxoisovalerate), the penultimate precursor to L-isoleucine and L-valine, respectively. The chain is Dihydroxy-acid dehydratase from Psychrobacter arcticus (strain DSM 17307 / VKM B-2377 / 273-4).